Here is a 284-residue protein sequence, read N- to C-terminus: Bifunctional protein FolD 2 (284 aa).

NADP(+) contacts are provided by residues G164–G166, S189, and I230.

The protein belongs to the tetrahydrofolate dehydrogenase/cyclohydrolase family. In terms of assembly, homodimer.

The enzyme catalyses (6R)-5,10-methylene-5,6,7,8-tetrahydrofolate + NADP(+) = (6R)-5,10-methenyltetrahydrofolate + NADPH. It catalyses the reaction (6R)-5,10-methenyltetrahydrofolate + H2O = (6R)-10-formyltetrahydrofolate + H(+). It participates in one-carbon metabolism; tetrahydrofolate interconversion. Its function is as follows. Catalyzes the oxidation of 5,10-methylenetetrahydrofolate to 5,10-methenyltetrahydrofolate and then the hydrolysis of 5,10-methenyltetrahydrofolate to 10-formyltetrahydrofolate. The protein is Bifunctional protein FolD 2 of Desulfitobacterium hafniense (strain Y51).